Consider the following 434-residue polypeptide: 3-phosphoshikimate 1-carboxyvinyltransferase (434 aa).

Positions 22, 23, and 27 each coordinate 3-phosphoshikimate. K22 provides a ligand contact to phosphoenolpyruvate. Residues G93 and R121 each contribute to the phosphoenolpyruvate site. The 3-phosphoshikimate site is built by S168, S169, Q170, S199, D320, and K347. Residue Q170 participates in phosphoenolpyruvate binding. Residue D320 is the Proton acceptor of the active site. The phosphoenolpyruvate site is built by R351, R395, and K420.

This sequence belongs to the EPSP synthase family. As to quaternary structure, monomer.

The protein localises to the cytoplasm. It catalyses the reaction 3-phosphoshikimate + phosphoenolpyruvate = 5-O-(1-carboxyvinyl)-3-phosphoshikimate + phosphate. Its pathway is metabolic intermediate biosynthesis; chorismate biosynthesis; chorismate from D-erythrose 4-phosphate and phosphoenolpyruvate: step 6/7. Functionally, catalyzes the transfer of the enolpyruvyl moiety of phosphoenolpyruvate (PEP) to the 5-hydroxyl of shikimate-3-phosphate (S3P) to produce enolpyruvyl shikimate-3-phosphate and inorganic phosphate. The polypeptide is 3-phosphoshikimate 1-carboxyvinyltransferase (Cupriavidus necator (strain ATCC 17699 / DSM 428 / KCTC 22496 / NCIMB 10442 / H16 / Stanier 337) (Ralstonia eutropha)).